The sequence spans 118 residues: Large ribosomal subunit protein uL18 (118 aa).

This sequence belongs to the universal ribosomal protein uL18 family. In terms of assembly, part of the 50S ribosomal subunit; part of the 5S rRNA/L5/L18/L25 subcomplex. Contacts the 5S and 23S rRNAs.

This is one of the proteins that bind and probably mediate the attachment of the 5S RNA into the large ribosomal subunit, where it forms part of the central protuberance. This Campylobacter concisus (strain 13826) protein is Large ribosomal subunit protein uL18.